The sequence spans 569 residues: Paxillin-B (569 aa).

The short motif at 10-18 (DLDLLLADL) is the LD motif 1 element. A compositionally biased stretch (polar residues) spans 62-78 (QPQTVQTISTPAPKNHN). A disordered region spans residues 62-103 (QPQTVQTISTPAPKNHNTTTTTASFSVSSQPAPQPPQQSQQI). Positions 79 to 102 (TTTTTASFSVSSQPAPQPPQQSQQ) are enriched in low complexity. Positions 106–112 (LDDLDEL) match the LD motif 2 motif. The tract at residues 129–311 (TTPEEHITHA…SPKVVHGDDL (183 aa)) is disordered. Residues 150–161 (NTSSTNSASSLS) are compositionally biased toward low complexity. Polar residues-rich tracts occupy residues 162-188 (RPNNNPSVVSTPQPGKVTSTATITTKK) and 196-206 (TLETTSGNNVY). The span at 207-217 (SSQPSQSQPQP) shows a compositional bias: low complexity. Residues 232–239 (LDELLKGL) carry the LD motif 3 motif. Over residues 258–272 (HQHHHQHQHHHHHNP) the composition is skewed to basic residues. Over residues 273–301 (NHNQTQTVTTQINIGRTNTPNNNNNNNTN) the composition is skewed to low complexity. Positions 311–318 (LDNLLNNL) match the LD motif 4 motif. 4 LIM zinc-binding domains span residues 334 to 391 (GTCG…QELF), 393 to 452 (ARCA…TFAV), 453 to 510 (RCGG…QQAG), and 511 to 569 (SVCS…KLFA).

Belongs to the paxillin family. As to expression, expressed in the upper and lower cup of the fruiting body.

Its subcellular location is the cytoplasm. It is found in the cell cortex. The protein resides in the cell projection. It localises to the filopodium. The protein localises to the cell junction. Its subcellular location is the focal adhesion. It is found in the cytoskeleton. Its function is as follows. Required for cell-substrate adhesion, cell sorting, slug migration, and cell differentiation. May function upstream of limB. The polypeptide is Paxillin-B (paxB) (Dictyostelium discoideum (Social amoeba)).